Reading from the N-terminus, the 287-residue chain is Ciliary microtubule inner protein 6 (287 aa).

2 stretches are compositionally biased toward basic and acidic residues: residues 1-15 (MEEKEDKHQQHKIED) and 25-34 (EEIKHEEKPG). Residues 1–42 (MEEKEDKHQQHKIEDAAITYVSENEEIKHEEKPGKSIHHSKS) are disordered. The mn 1 stretch occupies residues 128 to 160 (GIVPLASPGTSAELQNNFIEYISFIHQYDARKT). Residues 179–287 (KPGSRPTVPK…PLNPPIKKSE (109 aa)) form a disordered region. Basic and acidic residues-rich tracts occupy residues 203 to 212 (EQSKKTEKGN) and 232 to 245 (LEPKTHLSETDVRQ). The mn 2 stretch occupies residues 213–246 (SAESRMISPGLCQQNSQELLEPKTHLSETDVRQA).

It localises to the cell projection. The protein localises to the cilium. In Homo sapiens (Human), this protein is Ciliary microtubule inner protein 6.